The chain runs to 103 residues: Putative membrane protein insertion efficiency factor (103 aa).

It belongs to the UPF0161 family.

The protein localises to the cell inner membrane. Its function is as follows. Could be involved in insertion of integral membrane proteins into the membrane. The chain is Putative membrane protein insertion efficiency factor from Chlamydia pneumoniae (Chlamydophila pneumoniae).